Reading from the N-terminus, the 322-residue chain is Ferredoxin--NADP reductase (322 aa).

Residues Asp34, Gln42, Tyr47, Val87, Phe120, Asp279, and Thr320 each coordinate FAD.

Belongs to the ferredoxin--NADP reductase type 2 family. Homodimer. FAD is required as a cofactor.

It carries out the reaction 2 reduced [2Fe-2S]-[ferredoxin] + NADP(+) + H(+) = 2 oxidized [2Fe-2S]-[ferredoxin] + NADPH. This is Ferredoxin--NADP reductase from Streptococcus pneumoniae (strain Hungary19A-6).